We begin with the raw amino-acid sequence, 250 residues long: Triosephosphate isomerase (250 aa).

9-11 contacts substrate; that stretch reads NWK. Residue histidine 96 is the Electrophile of the active site. Glutamate 168 serves as the catalytic Proton acceptor. Substrate is bound by residues glycine 174, serine 216, and 237-238; that span reads GG.

Belongs to the triosephosphate isomerase family. In terms of assembly, homodimer.

The protein localises to the cytoplasm. The catalysed reaction is D-glyceraldehyde 3-phosphate = dihydroxyacetone phosphate. Its pathway is carbohydrate biosynthesis; gluconeogenesis. It functions in the pathway carbohydrate degradation; glycolysis; D-glyceraldehyde 3-phosphate from glycerone phosphate: step 1/1. Involved in the gluconeogenesis. Catalyzes stereospecifically the conversion of dihydroxyacetone phosphate (DHAP) to D-glyceraldehyde-3-phosphate (G3P). This Leptospira borgpetersenii serovar Hardjo-bovis (strain JB197) protein is Triosephosphate isomerase.